The primary structure comprises 267 residues: MTSVSDCFQSLRDRRQCALIPFITAGDPDLETTAKALRLLDASGADLIELGVPYSDPLADGPVIQAAATRALGRGVKLEDVLGVVKEVSPEIKAPIILFTYYNPIFYRGVEAFLQQVKAAGVQGLVVPDLPLEEAESLLKPAHEVGIAVTLLVAPTSPIERIEAIARQSQGFIYLVSVTGVTGMRSQVTSRVKELLTSLRSATDKPIGVGFGISKPEHALQVKNWGADAVIVGSAMVKRLAEGTPEEGLKAIGAFCQDLKQALKEDQ.

Residues Glu-49 and Asp-60 each act as proton acceptor in the active site.

The protein belongs to the TrpA family. Tetramer of two alpha and two beta chains.

It catalyses the reaction (1S,2R)-1-C-(indol-3-yl)glycerol 3-phosphate + L-serine = D-glyceraldehyde 3-phosphate + L-tryptophan + H2O. The protein operates within amino-acid biosynthesis; L-tryptophan biosynthesis; L-tryptophan from chorismate: step 5/5. Functionally, the alpha subunit is responsible for the aldol cleavage of indoleglycerol phosphate to indole and glyceraldehyde 3-phosphate. This is Tryptophan synthase alpha chain from Rippkaea orientalis (strain PCC 8801 / RF-1) (Cyanothece sp. (strain PCC 8801)).